The following is a 551-amino-acid chain: Cytochrome P450 monooxygenase abl5 (551 aa).

The N-linked (GlcNAc...) asparagine glycan is linked to Asn24. The chain crosses the membrane as a helical span at residues 37–57 (VVLNTLTAIVVVWICYRAVIY). 5 N-linked (GlcNAc...) asparagine glycosylation sites follow: Asn174, Asn218, Asn283, Asn307, and Asn441. Cys495 is a binding site for heme.

The protein belongs to the cytochrome P450 family. Heme is required as a cofactor.

Its subcellular location is the membrane. Functionally, cytochrome P450 monooxygenase; part of the gene cluster that mediates the biosynthesis of abscisic acid (ABA), a phytohormone that acts antagonistically toward salicylic acid (SA), jasmonic acid (JA) and ethylene (ETH) signaling, to impede plant defense responses. The first step of the pathway catalyzes the reaction from farnesyl diphosphate to alpha-ionylideneethane performed by the alpha-ionylideneethane synthase abl3 via a three-step reaction mechanism involving 2 neutral intermediates, beta-farnesene and allofarnesene. The cytochrome P450 monooxygenase abl1 might then be involved in the conversion of alpha-ionylideneethane to alpha-ionylideneacetic acid. Alpha-ionylideneacetic acid is further converted to abscisic acid in 2 steps involving the cytochrome P450 monooxygenase abl2 and the short-chain dehydrogenase/reductase abl4, via the intermediates 1'-deoxy-ABA or 1',4'-trans-diol-ABA, depending on the order of action of these 2 enzymes. Abl2 is responsible for the hydroxylation of carbon atom C-1' and abl4 might be involved in the oxidation of the C-4' carbon atom. The cytochrome monooxygenase abl5 seems not essential for the biosynthesis of ABA and its function remains to be identified. In Leptosphaeria maculans (strain JN3 / isolate v23.1.3 / race Av1-4-5-6-7-8) (Blackleg fungus), this protein is Cytochrome P450 monooxygenase abl5.